The sequence spans 423 residues: LysM domain-containing GPI-anchored protein 3 (423 aa).

The signal sequence occupies residues 1-24 (MKNPEKPLLLFLILASSLASMATA). Disulfide bonds link cysteine 31–cysteine 97, cysteine 37–cysteine 160, cysteine 95–cysteine 158, and cysteine 97–cysteine 160. The 48-residue stretch at 107 to 154 (THYKTRTSDTLGSIADSVYGGLVSPEQIQVANSETDLSVLDVGTKLVI) folds into the LysM 1 domain. Residue asparagine 162 is glycosylated (N-linked (GlcNAc...) asparagine). The LysM 2 domain maps to 173 to 216 (LSYVVRGIDTMAGIAKRFSTSVTDLTNVNAMGAPDINPGDILAV). Intrachain disulfides connect cysteine 221/cysteine 253 and cysteine 248/cysteine 276. An N-linked (GlcNAc...) asparagine glycan is attached at asparagine 238. The N-linked (GlcNAc...) asparagine glycan is linked to asparagine 285. A lipid anchor (GPI-anchor amidated glycine) is attached at glycine 394. The propeptide at 395-423 (GSISIASCPLSYYSFIALLIPIGSCFFVF) is removed in mature form.

As to quaternary structure, interacts with peptidoglycans.

It localises to the cell membrane. Functionally, required as a cell surface receptor for peptidoglycan (PGN) elicitor signaling leading to innate immunity. Plays an essential role in detecting PGNs and restricting bacterial growth (of Pseudomonas syringae pv. tomato DC3000 for example). The sequence is that of LysM domain-containing GPI-anchored protein 3 (LYM3) from Arabidopsis thaliana (Mouse-ear cress).